The sequence spans 360 residues: Phospho-N-acetylmuramoyl-pentapeptide-transferase (360 aa).

Transmembrane regions (helical) follow at residues 26 to 46 (AIVS…RMIA), 72 to 92 (PTMG…LWAY), 94 to 114 (SNPY…VGFV), 132 to 152 (WKYF…YMIG), 168 to 188 (VMPQ…VGTS), 199 to 219 (GLAI…AWAT), 236 to 256 (AGEL…FLWF), 263 to 283 (VFMG…IAVL), 288 to 308 (FLLV…ILQV), and 338 to 358 (VIVR…ATLK).

Belongs to the glycosyltransferase 4 family. MraY subfamily. The cofactor is Mg(2+).

It localises to the cell inner membrane. It catalyses the reaction UDP-N-acetyl-alpha-D-muramoyl-L-alanyl-gamma-D-glutamyl-meso-2,6-diaminopimeloyl-D-alanyl-D-alanine + di-trans,octa-cis-undecaprenyl phosphate = di-trans,octa-cis-undecaprenyl diphospho-N-acetyl-alpha-D-muramoyl-L-alanyl-D-glutamyl-meso-2,6-diaminopimeloyl-D-alanyl-D-alanine + UMP. It functions in the pathway cell wall biogenesis; peptidoglycan biosynthesis. In terms of biological role, catalyzes the initial step of the lipid cycle reactions in the biosynthesis of the cell wall peptidoglycan: transfers peptidoglycan precursor phospho-MurNAc-pentapeptide from UDP-MurNAc-pentapeptide onto the lipid carrier undecaprenyl phosphate, yielding undecaprenyl-pyrophosphoryl-MurNAc-pentapeptide, known as lipid I. This Erwinia tasmaniensis (strain DSM 17950 / CFBP 7177 / CIP 109463 / NCPPB 4357 / Et1/99) protein is Phospho-N-acetylmuramoyl-pentapeptide-transferase.